The sequence spans 341 residues: Phosphate acyltransferase (341 aa).

Belongs to the PlsX family. Homodimer. Probably interacts with PlsY.

The protein resides in the cytoplasm. It carries out the reaction a fatty acyl-[ACP] + phosphate = an acyl phosphate + holo-[ACP]. Its pathway is lipid metabolism; phospholipid metabolism. Catalyzes the reversible formation of acyl-phosphate (acyl-PO(4)) from acyl-[acyl-carrier-protein] (acyl-ACP). This enzyme utilizes acyl-ACP as fatty acyl donor, but not acyl-CoA. The chain is Phosphate acyltransferase from Saccharophagus degradans (strain 2-40 / ATCC 43961 / DSM 17024).